A 123-amino-acid chain; its full sequence is Small ribosomal subunit protein uS12 (123 aa).

Residues 1–32 (MPTINQLVRHGRKRSVKKTNTPALKASPQKRG) form a disordered region. Asp-89 is modified (3-methylthioaspartic acid).

Belongs to the universal ribosomal protein uS12 family. Part of the 30S ribosomal subunit. Contacts proteins S8 and S17. May interact with IF1 in the 30S initiation complex.

Functionally, with S4 and S5 plays an important role in translational accuracy. In terms of biological role, interacts with and stabilizes bases of the 16S rRNA that are involved in tRNA selection in the A site and with the mRNA backbone. Located at the interface of the 30S and 50S subunits, it traverses the body of the 30S subunit contacting proteins on the other side and probably holding the rRNA structure together. The combined cluster of proteins S8, S12 and S17 appears to hold together the shoulder and platform of the 30S subunit. This chain is Small ribosomal subunit protein uS12, found in Desulfatibacillum aliphaticivorans.